We begin with the raw amino-acid sequence, 406 residues long: Cysteine desulfurase (406 aa).

Residue Lys-226 is modified to N6-(pyridoxal phosphate)lysine. Catalysis depends on Cys-364, which acts as the Cysteine persulfide intermediate.

This sequence belongs to the class-V pyridoxal-phosphate-dependent aminotransferase family. Csd subfamily. In terms of assembly, homodimer. Interacts with SufE and the SufBCD complex composed of SufB, SufC and SufD. The interaction with SufE is required to mediate the direct transfer of the sulfur atom from the S-sulfanylcysteine. Pyridoxal 5'-phosphate is required as a cofactor.

It localises to the cytoplasm. The catalysed reaction is (sulfur carrier)-H + L-cysteine = (sulfur carrier)-SH + L-alanine. The enzyme catalyses L-selenocysteine + AH2 = hydrogenselenide + L-alanine + A + H(+). It functions in the pathway cofactor biosynthesis; iron-sulfur cluster biosynthesis. In terms of biological role, cysteine desulfurases mobilize the sulfur from L-cysteine to yield L-alanine, an essential step in sulfur metabolism for biosynthesis of a variety of sulfur-containing biomolecules. Component of the suf operon, which is activated and required under specific conditions such as oxidative stress and iron limitation. Acts as a potent selenocysteine lyase in vitro, that mobilizes selenium from L-selenocysteine. Selenocysteine lyase activity is however unsure in vivo. The chain is Cysteine desulfurase from Escherichia coli (strain K12 / MC4100 / BW2952).